Consider the following 60-residue polypeptide: Bowman-Birk type proteinase inhibitor C1 (60 aa).

Cystine bridges form between C5–C21, C11–C19, C28–C35, and C32–C49.

Belongs to the Bowman-Birk serine protease inhibitor family. In terms of tissue distribution, expressed in bulb (at protein level).

Its function is as follows. Serine protease inhibitor. Strongly inhibits trypsin (Ki = 0.22 nM) and very weakly inhibits chymotrypsin (Ki = 1200 nM). Does not inhibit bacterial subtilisin. The protein is Bowman-Birk type proteinase inhibitor C1 of Hyacinthus orientalis (Common hyacinth).